Consider the following 142-residue polypeptide: Hemoglobin subunit alpha (142 aa).

The Globin domain maps to 2-142; sequence VLSSADKNNV…VSTVLTSKYR (141 aa). Ser-4 bears the Phosphoserine mark. 2 positions are modified to N6-succinyllysine: Lys-8 and Lys-12. At Lys-17 the chain carries N6-acetyllysine; alternate. N6-succinyllysine; alternate is present on Lys-17. Phosphotyrosine is present on Tyr-25. At Ser-36 the chain carries Phosphoserine. Lys-41 is subject to N6-succinyllysine. Ser-50 bears the Phosphoserine mark. His-59 serves as a coordination point for O2. His-88 contacts heme b. Phosphoserine is present on Ser-103. Thr-109 is modified (phosphothreonine). The residue at position 125 (Ser-125) is a Phosphoserine. 2 positions are modified to phosphothreonine: Thr-135 and Thr-138. Phosphoserine is present on Ser-139.

This sequence belongs to the globin family. In terms of assembly, heterotetramer of two alpha chains and two beta chains. In terms of tissue distribution, red blood cells.

Its function is as follows. Involved in oxygen transport from the lung to the various peripheral tissues. In terms of biological role, hemopressin acts as an antagonist peptide of the cannabinoid receptor CNR1. Hemopressin-binding efficiently blocks cannabinoid receptor CNR1 and subsequent signaling. In Panthera leo (Lion), this protein is Hemoglobin subunit alpha (HBA).